Consider the following 779-residue polypeptide: Endoribonuclease YSH1 (779 aa).

Positions 68, 70, 72, 73, 163, and 184 each coordinate Zn(2+). Residue His-408 is the Proton donor of the active site. His-430 provides a ligand contact to Zn(2+). Position 517 is a phosphoserine; by ATM or ATR (Ser-517).

It belongs to the metallo-beta-lactamase superfamily. RNA-metabolizing metallo-beta-lactamase-like family. CPSF2/YSH1 subfamily. Component of the cleavage and polyadenylation factor (CPF) complex, which is composed of at least PTI1, SYC1, SSU72, GLC7, MPE1, REF2, PFS2, PTA1, YSH1/BRR5, SWD2, CFT2/YDH1, YTH1, CFT1/YHH1, FIP1 and PAP1. Interacts with FIP1, PFS2, RNA14 and YTH1. Requires Zn(2+) as cofactor.

It is found in the nucleus. Functionally, component of the cleavage and polyadenylation factor (CPF) complex, which plays a key role in polyadenylation-dependent pre-mRNA 3'-end formation and cooperates with cleavage factors including the CFIA complex and NAB4/CFIB. Has endonuclease activity. In Saccharomyces cerevisiae (strain ATCC 204508 / S288c) (Baker's yeast), this protein is Endoribonuclease YSH1 (YSH1).